The primary structure comprises 349 residues: Magnesium-protoporphyrin IX monomethyl ester [oxidative] cyclase (349 aa).

A disordered region spans residues methionine 1–histidine 22.

Belongs to the AcsF family. Fe cation serves as cofactor.

The catalysed reaction is Mg-protoporphyrin IX 13-monomethyl ester + 3 NADPH + 3 O2 + 2 H(+) = 3,8-divinyl protochlorophyllide a + 3 NADP(+) + 5 H2O. The protein operates within porphyrin-containing compound metabolism; chlorophyll biosynthesis (light-independent). In terms of biological role, catalyzes the formation of the isocyclic ring in chlorophyll biosynthesis. Mediates the cyclase reaction, which results in the formation of divinylprotochlorophyllide (Pchlide) characteristic of all chlorophylls from magnesium-protoporphyrin IX 13-monomethyl ester (MgPMME). This chain is Magnesium-protoporphyrin IX monomethyl ester [oxidative] cyclase, found in Prochlorococcus marinus (strain MIT 9211).